A 182-amino-acid chain; its full sequence is MQTEHVILLNAQGVPTGTLEKYAAHTADTRLHLAFSSWLFNAKGQLLVTRRALSKKAWPGVWTNSVCGHPQLGESNEDAVIRRCRYELGVEITPPESIYPDFRYRATDPNGIVENEVCPVFAARTTSALQINDDEVMDYQWCDLADVLRGIDATPWAFSPWMVMQATNREARIRLSAFTQLK.

Residues His25 and His32 each coordinate Mn(2+). The 135-residue stretch at Arg30 to Met164 folds into the Nudix hydrolase domain. Cys67 is an active-site residue. Position 67 (Cys67) interacts with Mg(2+). His69 provides a ligand contact to Mn(2+). Residue Glu87 coordinates Mg(2+). Mn(2+) is bound by residues Glu114 and Glu116. Glu116 is an active-site residue.

The protein belongs to the IPP isomerase type 1 family. Homodimer. Mg(2+) is required as a cofactor. It depends on Mn(2+) as a cofactor.

Its subcellular location is the cytoplasm. It carries out the reaction isopentenyl diphosphate = dimethylallyl diphosphate. Its pathway is isoprenoid biosynthesis; dimethylallyl diphosphate biosynthesis; dimethylallyl diphosphate from isopentenyl diphosphate: step 1/1. Its function is as follows. Catalyzes the 1,3-allylic rearrangement of the homoallylic substrate isopentenyl (IPP) to its highly electrophilic allylic isomer, dimethylallyl diphosphate (DMAPP). This chain is Isopentenyl-diphosphate Delta-isomerase, found in Shigella dysenteriae serotype 1 (strain Sd197).